The chain runs to 429 residues: tRNA-2-methylthio-N(6)-dimethylallyladenosine synthase (429 aa).

The MTTase N-terminal domain maps to Lys2–Phe115. [4Fe-4S] cluster contacts are provided by Cys11, Cys46, Cys78, Cys147, Cys151, and Cys154. Residues Arg133–Glu365 form the Radical SAM core domain. The TRAM domain occupies Lys368–Ala429.

Belongs to the methylthiotransferase family. MiaB subfamily. As to quaternary structure, monomer. It depends on [4Fe-4S] cluster as a cofactor.

It is found in the cytoplasm. The catalysed reaction is N(6)-dimethylallyladenosine(37) in tRNA + (sulfur carrier)-SH + AH2 + 2 S-adenosyl-L-methionine = 2-methylsulfanyl-N(6)-dimethylallyladenosine(37) in tRNA + (sulfur carrier)-H + 5'-deoxyadenosine + L-methionine + A + S-adenosyl-L-homocysteine + 2 H(+). Functionally, catalyzes the methylthiolation of N6-(dimethylallyl)adenosine (i(6)A), leading to the formation of 2-methylthio-N6-(dimethylallyl)adenosine (ms(2)i(6)A) at position 37 in tRNAs that read codons beginning with uridine. This Campylobacter hominis (strain ATCC BAA-381 / DSM 21671 / CCUG 45161 / LMG 19568 / NCTC 13146 / CH001A) protein is tRNA-2-methylthio-N(6)-dimethylallyladenosine synthase.